We begin with the raw amino-acid sequence, 542 residues long: Chaperonin GroEL (542 aa).

Residues 29-32, 86-90, glycine 413, and aspartate 492 contribute to the ATP site; these read TLGP and DGTTT.

Belongs to the chaperonin (HSP60) family. Forms a cylinder of 14 subunits composed of two heptameric rings stacked back-to-back. Interacts with the co-chaperonin GroES.

Its subcellular location is the cytoplasm. It carries out the reaction ATP + H2O + a folded polypeptide = ADP + phosphate + an unfolded polypeptide.. Together with its co-chaperonin GroES, plays an essential role in assisting protein folding. The GroEL-GroES system forms a nano-cage that allows encapsulation of the non-native substrate proteins and provides a physical environment optimized to promote and accelerate protein folding. The chain is Chaperonin GroEL from Nocardia asteroides.